The sequence spans 222 residues: Octanoyltransferase (222 aa).

A BPL/LPL catalytic domain is found at Gly-34–Val-214. Residues Arg-72–His-79, Ala-144–Gly-146, and Gly-157–Ala-159 each bind substrate. Cys-175 functions as the Acyl-thioester intermediate in the catalytic mechanism.

This sequence belongs to the LipB family.

The protein resides in the cytoplasm. It carries out the reaction octanoyl-[ACP] + L-lysyl-[protein] = N(6)-octanoyl-L-lysyl-[protein] + holo-[ACP] + H(+). Its pathway is protein modification; protein lipoylation via endogenous pathway; protein N(6)-(lipoyl)lysine from octanoyl-[acyl-carrier-protein]: step 1/2. Functionally, catalyzes the transfer of endogenously produced octanoic acid from octanoyl-acyl-carrier-protein onto the lipoyl domains of lipoate-dependent enzymes. Lipoyl-ACP can also act as a substrate although octanoyl-ACP is likely to be the physiological substrate. In Paenarthrobacter aurescens (strain TC1), this protein is Octanoyltransferase.